A 47-amino-acid chain; its full sequence is Accessory gland peptide Acp33A (47 aa).

The signal sequence occupies residues 1–21 (MLPSKRVPFLFTIILFLAGLG).

Main cells of accessory gland and seminal fluid.

It localises to the secreted. Responsible for physiological and behavioral changes in mated female flies. This is Accessory gland peptide Acp33A (Acp33A) from Drosophila melanogaster (Fruit fly).